We begin with the raw amino-acid sequence, 189 residues long: Probable DNA-directed RNA polymerase subunit delta (189 aa).

The HTH HARE-type domain maps to 14–81; that stretch reads LSMIEVAHAI…GENVWALRTW (68 aa). Acidic residues-rich tracts occupy residues 90-100 and 118-189; these read EVDHPEDDGDE and EGDD…EDEE. Residues 90 to 189 are disordered; sequence EVDHPEDDGD…DDLDDDEDEE (100 aa).

The protein belongs to the RpoE family. RNAP is composed of a core of 2 alpha, a beta and a beta' subunits. The core is associated with a delta subunit and one of several sigma factors.

In terms of biological role, participates in both the initiation and recycling phases of transcription. In the presence of the delta subunit, RNAP displays an increased specificity of transcription, a decreased affinity for nucleic acids, and an increased efficiency of RNA synthesis because of enhanced recycling. The polypeptide is Probable DNA-directed RNA polymerase subunit delta (Lactobacillus delbrueckii subsp. bulgaricus (strain ATCC BAA-365 / Lb-18)).